A 295-amino-acid polypeptide reads, in one-letter code: Ethanolamine ammonia-lyase small subunit (295 aa).

Residues V209 and E230 each coordinate adenosylcob(III)alamin.

This sequence belongs to the EutC family. The basic unit is a heterodimer which dimerizes to form tetramers. The heterotetramers trimerize; 6 large subunits form a core ring with 6 small subunits projecting outwards. Adenosylcob(III)alamin is required as a cofactor.

The protein resides in the bacterial microcompartment. The enzyme catalyses ethanolamine = acetaldehyde + NH4(+). It participates in amine and polyamine degradation; ethanolamine degradation. Its function is as follows. Catalyzes the deamination of various vicinal amino-alcohols to oxo compounds. Allows this organism to utilize ethanolamine as the sole source of nitrogen and carbon in the presence of external vitamin B12. This Clostridium perfringens (strain ATCC 13124 / DSM 756 / JCM 1290 / NCIMB 6125 / NCTC 8237 / Type A) protein is Ethanolamine ammonia-lyase small subunit.